A 115-amino-acid chain; its full sequence is Chaperone protein PrsD (115 aa).

The protein belongs to the periplasmic pilus chaperone family.

The protein resides in the periplasm. Mediates assembly of pili by forming soluble multimeric complexes with pili subunits as an intermediate step in the assembly process. This chain is Chaperone protein PrsD (prsD), found in Escherichia coli.